The chain runs to 523 residues: Jerky protein homolog-like (523 aa).

Positions 1-52 (MSGKRKRVVLTIKDKLDIIKKLEDGGSSKQLAVIYGIGETTVRDIRKNKEKI) constitute an HTH psq-type domain. 2 consecutive DNA-binding regions (H-T-H motif) follow at residues 28–48 (SKQL…IRKN) and 100–132 (PICA…FKQR). The 73-residue stretch at 67 to 139 (KRKSMKPSMY…KQRHSIREIN (73 aa)) folds into the HTH CENPB-type domain. Positions 168–385 (LQPEQIYNAD…VKPVTISRAW (218 aa)) constitute a DDE-1 domain.

It belongs to the tigger transposable element derived protein family.

The protein localises to the nucleus. This Mus musculus (Mouse) protein is Jerky protein homolog-like (Jrkl).